A 1272-amino-acid polypeptide reads, in one-letter code: MAQRRKITAIVGLEQYNAGLWRKIKSMLDKDAELVQLSDVDLEKQNPEAATAIREADCVFMSMINFKEQIDWFKEQLDQAINEKTIFIFESMPEAMALTKVGSYQVTEGKSGMPDMVKKIAKMLVKGRDEDALYGYMKLMKIMRTILPLVPNKAKDFKNWLMVYSYWLQPTPENIVNMFRLILREYFDSNVKVEPIVDVPNMGLYHPDAKEYFKDVKSFKSWSKKRGVNFDKSQKMALLFFRKHLLQEKTYIDNTIRTLEKHGVNVFPAFVMGVEGHVLVRDWLMKEKIDLLVNMMGFGLVGGPAGSTKPGTAADARHEILTGLDVPYMVAQPLLVQDFESWHELGVSPMQVTFTYSIPEMDGATAPVILGALQDGKVETVQERLDRLAILSKKWMRLRATSNRDKRVALVVYDYPPGLGKKATAALLDVPTTLLRILERLKKEGYNVGTLPESPTKLFEMLDRATDYQIMQNKPEAIKVSREKYNELATYHERERIEERWQAFPGEIAPVGSEEVFLGGLRLGNIYIGVQPRLGVQGDPMRLIFDKANTPHHQYISFYRWISREFDAHALVHVGMHGSVEWMPGLQTGLTGECWPDALLGEVPHFYIYPVNNPSESTIAKRRGLATMVSHVVPPLARAGLYKELPALKDLLADYRERNQAQGEDVEQVQEAIMTKAELLNLTDDCPRRPDEPFSDFVSRLYIYIVELENRLISNSLHVFGEAGPLESQIITITETIKNRGENGRSLPYIFIDTSGRNGHYGSYEEISSLSRKGDEAAIQLREWAENACREFVKQTMFDRKNPMQVFESVTGGGRMPEEDKPFIQRIIQEGAMMIQALSDNSSEMNSLVKVLDGGYIPSGPGGDLVRDGMNVLPSGRNIHSIDPWRIPSETAFKRGTLIADGLISKHVAENDGQYPETIAEVIWGLDTIKTKGEAVAVVIRLMGAEPAYDAFGKISHYNLTPLDKLGRPRVDVLMQLSPIFRDAFGILMDQLDRLVKDAAKADEPHEMNFIKKHVDEALAEGMDFEAATSRQFTQAPGAYGTYVDDMIEDSAWENEGDLDDLFIRRNSSAYGGGRKGEKQSEILQKLLGSVDRVVHQVDSTEFGISDIDHYFSSSGSLQLAARRRNTKTSDIKLNYVESFTSDIKLDEADKSLRVEYRSKLLNPKWFEGMLKHGHSGAGEISNRVTYMLGWDAVTKSVDDWVYKKTAETYALDPEMRERLATLNPQAIKNIVGRMLEAHGRGMWKADQSMIEELQEIYADLEDRLEGMADDD.

This sequence belongs to the Mg-chelatase subunit H family.

The catalysed reaction is protoporphyrin IX + Mg(2+) + ATP + H2O = Mg-protoporphyrin IX + ADP + phosphate + 3 H(+). The protein operates within porphyrin-containing compound metabolism; bacteriochlorophyll biosynthesis (light-independent). Involved in bacteriochlorophyll pigment biosynthesis; introduces a magnesium ion into protoporphyrin IX to yield Mg-protoroporphyrin IX. In Chlorobaculum parvum (strain DSM 263 / NCIMB 8327) (Chlorobium vibrioforme subsp. thiosulfatophilum), this protein is Magnesium-chelatase subunit H (bchH).